The chain runs to 423 residues: MTESVLDYMTRLGRAAREASRVIGRASTAQKNRALQAAADALDAARAELTAANELDLAAGRANGLEPALLDRLALTPARIDGMITGLRQVASLPDPVGAIRDMSYRPSGIQVGKMRTPLGVIGIIYESRPNVTIDAASLCLKSGNATILRGGSEAIHSNRAIATCIQRGLAEAGLPAAVVQVVETTDREAVGALISMPQFVDVIVPRGGRGLIERISRDARVPVIKHLDGICHVYVSQHADLDKAWNVAFNAKTYRYGICGAMETLLVDQRVAERFLPEMARRFQEKGVELRGCERTRALVEAKPATEDDWHTEYLDAILSIRVVNGLDQAIEHINHYGSHHTDSIISEHQGEARQFMAEVDSASVMLNTPTCFADGFEYGLGAEIGISTDKLHARGPVGLEGLTCEKYVVIGDGQLRGQGTC.

The protein belongs to the gamma-glutamyl phosphate reductase family.

The protein localises to the cytoplasm. It catalyses the reaction L-glutamate 5-semialdehyde + phosphate + NADP(+) = L-glutamyl 5-phosphate + NADPH + H(+). Its pathway is amino-acid biosynthesis; L-proline biosynthesis; L-glutamate 5-semialdehyde from L-glutamate: step 2/2. In terms of biological role, catalyzes the NADPH-dependent reduction of L-glutamate 5-phosphate into L-glutamate 5-semialdehyde and phosphate. The product spontaneously undergoes cyclization to form 1-pyrroline-5-carboxylate. This is Gamma-glutamyl phosphate reductase from Pseudomonas putida (strain GB-1).